The sequence spans 689 residues: SH3 domain-binding protein 1 (689 aa).

Residues 1-11 are compositionally biased toward basic residues; it reads MMKRQLHRMRQ. A disordered region spans residues 1–24; the sequence is MMKRQLHRMRQLAHTGSSGRTPET. Residues 1-275 are interaction with CGNL1; sequence MMKRQLHRMR…TAAPFSRVYG (275 aa). Positions 17-262 constitute a BAR domain; that stretch reads SSGRTPETAE…RDNHSQADSS (246 aa). A phosphoserine mark is found at serine 241 and serine 262. A Rho-GAP domain is found at 276-469; sequence VSLRTHLQDL…VLIQNADTLF (194 aa). The interval 470-689 is interaction with CD2AP; sequence PGDINFSVSG…RPRGLISETD (220 aa). Residues 507–689 form a disordered region; sequence TAATPTPTPA…RPRGLISETD (183 aa). Phosphoserine is present on residues serine 539 and serine 545. The span at 565 to 575 shows a compositional bias: pro residues; it reads PARPTMPPPQP. The span at 576-594 shows a compositional bias: low complexity; that stretch reads SSSRSSPPALSLPAGSVSP. Serine 586 bears the Phosphoserine mark. At threonine 596 the chain carries Phosphothreonine. The SH3-binding signature appears at 611 to 620; that stretch reads APTVPPPLPP. Residues 613–625 are compositionally biased toward pro residues; that stretch reads TVPPPLPPAPPQP. At serine 641 the chain carries Phosphoserine. Residues 670-680 show a composition bias toward pro residues; sequence PPTPVLPPQPR.

As to quaternary structure, interacts with RAC1. Interacts with the exocyst via EXOC4 and EXOC8; required for the localization of both SH3BP1 and the exocyst to the leading edge of migrating cells. Interacts with CD2AP and CGNL1; probably part of a complex at cell junctions. Interacts with CAPZA1; recruits CAPZA1 to forming cell junctions. May interact with AFDN. Interacts with PLXND1; they dissociate upon SEMA3E binding to PLXND1 allowing SH3BP1 to transduce downstream signal through RAC1 inactivation. Interacts with ABL1, GRB2 and SRC (via SH3 domain).

Its subcellular location is the cell projection. It is found in the cell junction. The protein resides in the tight junction. The protein localises to the adherens junction. It localises to the phagocytic cup. Its subcellular location is the nucleus. It is found in the cytoplasm. The protein resides in the cytosol. In terms of biological role, GTPase activating protein/GAP which specifically converts GTP-bound Rho-type GTPases including RAC1 and CDC42 in their inactive GDP-bound form. By specifically inactivating RAC1 at the leading edge of migrating cells, it regulates the spatiotemporal organization of cell protrusions which is important for proper cell migration. Also negatively regulates CDC42 in the process of actin remodeling and the formation of epithelial cell junctions. Through its GAP activity toward RAC1 and/or CDC42 plays a specific role in phagocytosis of large particles. Specifically recruited by a PI3 kinase/PI3K-dependent mechanism to sites of large particles engagement, inactivates RAC1 and/or CDC42 allowing the reorganization of the underlying actin cytoskeleton required for engulfment. It also plays a role in angiogenesis and the process of repulsive guidance as part of a semaphorin-plexin signaling pathway. Following the binding of PLXND1 to extracellular SEMA3E it dissociates from PLXND1 and inactivates RAC1, inducing the intracellular reorganization of the actin cytoskeleton and the collapse of cells. In Rattus norvegicus (Rat), this protein is SH3 domain-binding protein 1.